We begin with the raw amino-acid sequence, 466 residues long: Glutamate--tRNA ligase (466 aa).

The short motif at 10–20 is the 'HIGH' region element; that stretch reads PSPTGALHIGG. Residues C99, C101, C126, and D128 each coordinate Zn(2+). The short motif at 239–243 is the 'KMSKS' region element; sequence KLSKR. K242 provides a ligand contact to ATP.

This sequence belongs to the class-I aminoacyl-tRNA synthetase family. Glutamate--tRNA ligase type 1 subfamily. Monomer. It depends on Zn(2+) as a cofactor.

Its subcellular location is the cytoplasm. The catalysed reaction is tRNA(Glu) + L-glutamate + ATP = L-glutamyl-tRNA(Glu) + AMP + diphosphate. Functionally, catalyzes the attachment of glutamate to tRNA(Glu) in a two-step reaction: glutamate is first activated by ATP to form Glu-AMP and then transferred to the acceptor end of tRNA(Glu). In Pelagibacter ubique (strain HTCC1062), this protein is Glutamate--tRNA ligase.